A 429-amino-acid polypeptide reads, in one-letter code: Enolase (429 aa).

A (2R)-2-phosphoglycerate-binding site is contributed by glutamine 167. Glutamate 209 acts as the Proton donor in catalysis. Residues aspartate 246, glutamate 289, and aspartate 316 each coordinate Mg(2+). (2R)-2-phosphoglycerate is bound by residues lysine 341, arginine 370, serine 371, and lysine 392. The active-site Proton acceptor is lysine 341.

It belongs to the enolase family. Component of the RNA degradosome, a multiprotein complex involved in RNA processing and mRNA degradation. It depends on Mg(2+) as a cofactor.

It localises to the cytoplasm. The protein resides in the secreted. It is found in the cell surface. It carries out the reaction (2R)-2-phosphoglycerate = phosphoenolpyruvate + H2O. Its pathway is carbohydrate degradation; glycolysis; pyruvate from D-glyceraldehyde 3-phosphate: step 4/5. In terms of biological role, catalyzes the reversible conversion of 2-phosphoglycerate (2-PG) into phosphoenolpyruvate (PEP). It is essential for the degradation of carbohydrates via glycolysis. This chain is Enolase, found in Pseudomonas entomophila (strain L48).